The sequence spans 1295 residues: DNA-directed RNA polymerase subunit beta' (1295 aa).

Zn(2+)-binding residues include C66, C68, C81, and C84. 3 residues coordinate Mg(2+): D562, D564, and D566. 4 residues coordinate Zn(2+): C901, C975, C982, and C985.

This sequence belongs to the RNA polymerase beta' chain family. The RNAP catalytic core consists of 2 alpha, 1 beta, 1 beta' and 1 omega subunit. When a sigma factor is associated with the core the holoenzyme is formed, which can initiate transcription. It depends on Mg(2+) as a cofactor. The cofactor is Zn(2+).

The catalysed reaction is RNA(n) + a ribonucleoside 5'-triphosphate = RNA(n+1) + diphosphate. In terms of biological role, DNA-dependent RNA polymerase catalyzes the transcription of DNA into RNA using the four ribonucleoside triphosphates as substrates. The protein is DNA-directed RNA polymerase subunit beta' of Rubrobacter xylanophilus (strain DSM 9941 / JCM 11954 / NBRC 16129 / PRD-1).